A 734-amino-acid polypeptide reads, in one-letter code: Phosphoribosylformylglycinamidine synthase subunit PurL (734 aa).

His46 is a catalytic residue. ATP is bound by residues Tyr49 and Lys88. Position 90 (Glu90) interacts with Mg(2+). Substrate contacts are provided by residues 91–94 (SHNH) and Arg113. The active-site Proton acceptor is the His92. A Mg(2+)-binding site is contributed by Asp114. Residue Gln237 coordinates substrate. Asp265 provides a ligand contact to Mg(2+). 309-311 (ESQ) lines the substrate pocket. ATP contacts are provided by Asp489 and Gly526. Asn527 provides a ligand contact to Mg(2+). Residue Ser529 coordinates substrate.

It belongs to the FGAMS family. Monomer. Part of the FGAM synthase complex composed of 1 PurL, 1 PurQ and 2 PurS subunits.

It localises to the cytoplasm. It catalyses the reaction N(2)-formyl-N(1)-(5-phospho-beta-D-ribosyl)glycinamide + L-glutamine + ATP + H2O = 2-formamido-N(1)-(5-O-phospho-beta-D-ribosyl)acetamidine + L-glutamate + ADP + phosphate + H(+). It functions in the pathway purine metabolism; IMP biosynthesis via de novo pathway; 5-amino-1-(5-phospho-D-ribosyl)imidazole from N(2)-formyl-N(1)-(5-phospho-D-ribosyl)glycinamide: step 1/2. In terms of biological role, part of the phosphoribosylformylglycinamidine synthase complex involved in the purines biosynthetic pathway. Catalyzes the ATP-dependent conversion of formylglycinamide ribonucleotide (FGAR) and glutamine to yield formylglycinamidine ribonucleotide (FGAM) and glutamate. The FGAM synthase complex is composed of three subunits. PurQ produces an ammonia molecule by converting glutamine to glutamate. PurL transfers the ammonia molecule to FGAR to form FGAM in an ATP-dependent manner. PurS interacts with PurQ and PurL and is thought to assist in the transfer of the ammonia molecule from PurQ to PurL. The protein is Phosphoribosylformylglycinamidine synthase subunit PurL of Gluconobacter oxydans (strain 621H) (Gluconobacter suboxydans).